The chain runs to 365 residues: DNA N6-methyl methyltransferase (365 aa).

Belongs to the MT-A70-like family.

It carries out the reaction a 2'-deoxyadenosine in DNA + S-adenosyl-L-methionine = an N(6)-methyl-2'-deoxyadenosine in DNA + S-adenosyl-L-homocysteine + H(+). Methylates DNA on the 6th position of adenine (N(6)-methyladenosine). N(6)-methyladenosine (m6A) DNA is involved in epigenetic transgenerational inheritance. This Caenorhabditis elegans protein is DNA N6-methyl methyltransferase.